The primary structure comprises 337 residues: DNA-directed RNA polymerase subunit alpha (337 aa).

The interval 1 to 233 (MIQKNWQELI…DQLALFINFK (233 aa)) is alpha N-terminal domain (alpha-NTD). Residues 249–337 (FNPALLKKVD…DLAKRYEDQY (89 aa)) form an alpha C-terminal domain (alpha-CTD) region.

It belongs to the RNA polymerase alpha chain family. In terms of assembly, homodimer. The RNAP catalytic core consists of 2 alpha, 1 beta, 1 beta' and 1 omega subunit. When a sigma factor is associated with the core the holoenzyme is formed, which can initiate transcription.

It carries out the reaction RNA(n) + a ribonucleoside 5'-triphosphate = RNA(n+1) + diphosphate. DNA-dependent RNA polymerase catalyzes the transcription of DNA into RNA using the four ribonucleoside triphosphates as substrates. This chain is DNA-directed RNA polymerase subunit alpha, found in Bartonella henselae (strain ATCC 49882 / DSM 28221 / CCUG 30454 / Houston 1) (Rochalimaea henselae).